Here is a 509-residue protein sequence, read N- to C-terminus: Steroid 17-alpha-hydroxylase/17,20 lyase (509 aa).

Cys440 lines the heme pocket.

The protein belongs to the cytochrome P450 family. The cofactor is heme.

It localises to the endoplasmic reticulum membrane. The protein resides in the microsome membrane. The catalysed reaction is a C21-steroid + reduced [NADPH--hemoprotein reductase] + O2 = a 17alpha-hydroxy-C21-steroid + oxidized [NADPH--hemoprotein reductase] + H2O + H(+). The enzyme catalyses progesterone + reduced [NADPH--hemoprotein reductase] + O2 = 17alpha-hydroxyprogesterone + oxidized [NADPH--hemoprotein reductase] + H2O + H(+). It catalyses the reaction pregnenolone + reduced [NADPH--hemoprotein reductase] + O2 = 17alpha-hydroxypregnenolone + oxidized [NADPH--hemoprotein reductase] + H2O + H(+). It carries out the reaction 17alpha-hydroxyprogesterone + reduced [NADPH--hemoprotein reductase] + O2 = androst-4-ene-3,17-dione + acetate + oxidized [NADPH--hemoprotein reductase] + H2O + 2 H(+). The catalysed reaction is 17alpha-hydroxyprogesterone + reduced [NADPH--hemoprotein reductase] + O2 = 16alpha,17alpha-dihydroxyprogesterone + oxidized [NADPH--hemoprotein reductase] + H2O + H(+). The enzyme catalyses 16alpha,17alpha-dihydroxyprogesterone + reduced [NADPH--hemoprotein reductase] + O2 = 6beta,16alpha,17alpha-trihydroxyprogesterone + oxidized [NADPH--hemoprotein reductase] + H2O + H(+). It catalyses the reaction 17alpha-hydroxypregnenolone + reduced [NADPH--hemoprotein reductase] + O2 = 3beta-hydroxyandrost-5-en-17-one + acetate + oxidized [NADPH--hemoprotein reductase] + H2O + 2 H(+). It carries out the reaction 16alpha,17alpha-dihydroxypregnenolone + reduced [NADPH--hemoprotein reductase] + O2 = 3beta,16alpha-dihydroxy-androst-5-en-17-one + acetate + oxidized [NADPH--hemoprotein reductase] + H2O + 2 H(+). The catalysed reaction is 3beta-hydroxyandrost-5-en-17-one + reduced [NADPH--hemoprotein reductase] + O2 = 3beta,16alpha-dihydroxy-androst-5-en-17-one + oxidized [NADPH--hemoprotein reductase] + H2O + H(+). The enzyme catalyses androst-4-ene-3,17-dione + reduced [NADPH--hemoprotein reductase] + O2 = 16alpha-hydroxyandrost-4-ene-3,17-dione + oxidized [NADPH--hemoprotein reductase] + H2O + H(+). It functions in the pathway steroid hormone biosynthesis. Its pathway is steroid biosynthesis; glucocorticoid biosynthesis. Regulated predominantly by intracellular cAMP levels. The 17,20-lyase activity is stimulated by cytochrome b5, which acts as an allosteric effector increasing the Vmax of the lyase activity. Its function is as follows. A cytochrome P450 monooxygenase involved in corticoid and androgen biosynthesis. Catalyzes 17-alpha hydroxylation of C21 steroids, which is common for both pathways. A second oxidative step, required only for androgen synthesis, involves an acyl-carbon cleavage. The 17-alpha hydroxy intermediates, as part of adrenal glucocorticoids biosynthesis pathway, are precursors of cortisol. Hydroxylates steroid hormones, pregnenolone and progesterone to form 17-alpha hydroxy metabolites, followed by the cleavage of the C17-C20 bond to form C19 steroids, dehydroepiandrosterone (DHEA) and androstenedione. Has 16-alpha hydroxylase activity. Catalyzes 16-alpha hydroxylation of 17-alpha hydroxy pregnenolone, followed by the cleavage of the C17-C20 bond to form 16-alpha-hydroxy DHEA. Also 16-alpha hydroxylates androgens, relevant for estriol synthesis. Mechanistically, uses molecular oxygen inserting one oxygen atom into a substrate, and reducing the second into a water molecule, with two electrons provided by NADPH via cytochrome P450 reductase (CPR; NADPH-ferrihemoprotein reductase). The polypeptide is Steroid 17-alpha-hydroxylase/17,20 lyase (Cyp17a1) (Peromyscus leucopus (White-footed mouse)).